Here is a 1784-residue protein sequence, read N- to C-terminus: Protein mel-28 (1784 aa).

The segment at 1 to 956 (MDNENSSIFK…QNDDEDMPEV (956 aa)) is required for nuclear envelope and kinetochore localization. A required for association with mitotic chromosomes region spans residues 566-778 (GKIEEFCQLA…TSPEDSEHSE (213 aa)). Residues 846–1071 (APMTVTIGKH…HNSILKTAKG (226 aa)) form an important for nuclear localization region. Disordered stretches follow at residues 945 to 994 (KVQN…AKRI) and 1115 to 1784 (ETMT…RAKQ). Residues 1126–1149 (GKHDEEKDSEKNVVDEMEEVKDQE) are compositionally biased toward basic and acidic residues. Acidic residues-rich tracts occupy residues 1222–1232 (LEEEGEDEDIW) and 1266–1278 (VNEE…EEVQ). The segment at 1239–1601 (FEVQMDEDCE…TTVDPSSSAL (363 aa)) is chromatin binding. A compositionally biased stretch (basic and acidic residues) spans 1279-1293 (QDAKEPEKTEKRQEE). The segment covering 1297–1306 (EVMQPVIPEE) has biased composition (low complexity). Positions 1321 to 1336 (ELQEEPDIVPTGDEDT) are enriched in acidic residues. Over residues 1337-1351 (ADKVQEQAVEEDRPP) the composition is skewed to basic and acidic residues. Polar residues predominate over residues 1352-1366 (SRNTRSSSVQKSTSQ). Residues 1367 to 1382 (VEDRDPKELVEEERPP) show a composition bias toward basic and acidic residues. Over residues 1383–1398 (SRNTRSASVQKSSNQE) the composition is skewed to polar residues. Basic and acidic residues predominate over residues 1428 to 1444 (KVKDQKPEELIEEDRPP). Over residues 1445 to 1459 (SRNTRSASAQKTVAA) the composition is skewed to polar residues. The span at 1533–1546 (AAASTSSSRAGSVT) shows a compositional bias: low complexity. A compositionally biased stretch (acidic residues) spans 1566–1576 (VQEEEEEEAEE). Residues 1581–1606 (SRSTRSASVKNTTVDPSSSALASTKR) are compositionally biased toward polar residues. Positions 1601-1784 (LASTKRTTSR…LLRSARRAKQ (184 aa)) are important for nuclear localization. The segment at residues 1630-1642 (TPKRGRPAKKDAG) is a DNA-binding region (a.T hook 1). Residues 1630–1784 (TPKRGRPAKK…LLRSARRAKQ (155 aa)) form a required for chromosome segregation, nuclear growth, nucleoplasmic accumulation and cell cycle timing, but not required for nuclear envelope and kinetochore localization region. Over residues 1716-1735 (AGTSKQSRSVTRSRASSIDV) the composition is skewed to polar residues. The a.T hook 2 DNA-binding region spans 1746-1758 (KRGRGRPPKTVLE).

Ubiquitously expressed (at protein level).

Its subcellular location is the nucleus. The protein resides in the nucleoplasm. It is found in the nucleus envelope. The protein localises to the nucleus inner membrane. It localises to the nuclear pore complex. Its subcellular location is the chromosome. The protein resides in the centromere. It is found in the kinetochore. In terms of biological role, nuclear envelope protein which has essential roles in assembly of nuclear pore complexes and in chromatin maintenance during the cell cycle. Appears to be a stable structural component of the nuclear envelope during interphase. In dividing cells, localizes to kinetochores during early stages of mitosis and then to chromatin during late mitosis. Important for several mitotic processes including chromosome condensation, kinetochore assembly, chromosome segregation and cell-cycle timing. In postmitotic cells, plays a role in the early steps of nuclear pore complex assembly by recruiting the nucleoporins npp-10 and npp-5 to chromatin. Also involved in meiotic chromosome segregation. May function downstream of the Ran GTPase signaling pathway. The chain is Protein mel-28 from Caenorhabditis elegans.